We begin with the raw amino-acid sequence, 85 residues long: Colicin-E6 immunity protein (85 aa).

This sequence belongs to the cloacin immunity protein family.

Functionally, this protein inhibits the 16S RNA hydrolyzing activity of colicin E6 by binding with high affinity to the C-terminal catalytic domain of E6. This protein is able to protect a cell, which harbors the plasmid ColE6 against colicin E6. The sequence is that of Colicin-E6 immunity protein (imm) from Escherichia coli.